A 261-amino-acid chain; its full sequence is Mediator of RNA polymerase II transcription subunit 7 (261 aa).

Disordered regions lie at residues 1-55 (MAEA…TPAE) and 224-250 (DSAS…ANSS). 2 stretches are compositionally biased toward basic and acidic residues: residues 23-45 (FTPD…EDGK) and 230-240 (GENDTAKRTTG). Over residues 241 to 250 (DQDANNANSS) the composition is skewed to polar residues.

Belongs to the Mediator complex subunit 7 family. In terms of assembly, component of the Mediator complex.

It is found in the nucleus. Functionally, component of the Mediator complex, a coactivator involved in the regulated transcription of nearly all RNA polymerase II-dependent genes. Mediator functions as a bridge to convey information from gene-specific regulatory proteins to the basal RNA polymerase II transcription machinery. Mediator is recruited to promoters by direct interactions with regulatory proteins and serves as a scaffold for the assembly of a functional preinitiation complex with RNA polymerase II and the general transcription factors. This Neosartorya fischeri (strain ATCC 1020 / DSM 3700 / CBS 544.65 / FGSC A1164 / JCM 1740 / NRRL 181 / WB 181) (Aspergillus fischerianus) protein is Mediator of RNA polymerase II transcription subunit 7 (med7).